Here is a 396-residue protein sequence, read N- to C-terminus: Tryptophan synthase beta chain (396 aa).

K86 is modified (N6-(pyridoxal phosphate)lysine).

This sequence belongs to the TrpB family. In terms of assembly, tetramer of two alpha and two beta chains. Requires pyridoxal 5'-phosphate as cofactor.

It catalyses the reaction (1S,2R)-1-C-(indol-3-yl)glycerol 3-phosphate + L-serine = D-glyceraldehyde 3-phosphate + L-tryptophan + H2O. Its pathway is amino-acid biosynthesis; L-tryptophan biosynthesis; L-tryptophan from chorismate: step 5/5. Functionally, the beta subunit is responsible for the synthesis of L-tryptophan from indole and L-serine. The polypeptide is Tryptophan synthase beta chain (Francisella tularensis subsp. holarctica (strain FTNF002-00 / FTA)).